A 765-amino-acid chain; its full sequence is ATP-dependent RNA helicase DBP4 (765 aa).

Residues 1–14 (MAKPRRNNKNKKGQ) show a composition bias toward basic residues. A disordered region spans residues 1–24 (MAKPRRNNKNKKGQSRSQAREKEE). The Q motif motif lies at 47–75 (SQFSDLPITQETLRGLNESSFMSLTDIQK). The Helicase ATP-binding domain maps to 78–252 (IPIALKGEDL…RLSLTNPKRI (175 aa)). Residue 91–98 (ARTGSGKT) participates in ATP binding. The DEAD box signature appears at 200-203 (DEAD). Residues 266 to 438 (SLDQYYIRIP…SIRPQLQSLC (173 aa)) form the Helicase C-terminal domain. Disordered regions lie at residues 493 to 526 (KGGS…NEAS), 552 to 576 (NGSQ…RKDH), and 641 to 735 (KEQK…DKHN). Positions 558 to 568 (EDEDEEEEDDF) are enriched in acidic residues. Basic and acidic residues-rich tracts occupy residues 641 to 653 (KEQK…RETE) and 678 to 688 (KEVEKRMRDEE).

Belongs to the DEAD box helicase family. DDX10/DBP4 subfamily. Interacts with the U3 and U14 snoRNAs. Associates with pre-ribosomal complexes.

It is found in the nucleus. Its subcellular location is the nucleolus. It catalyses the reaction ATP + H2O = ADP + phosphate + H(+). In terms of biological role, ATP-dependent RNA helicase required for ribosome biogenesis. Involved in the release of U14 snoRNA in pre-ribosomal complexes. Required for pre-rRNA cleavage at site A2. This is ATP-dependent RNA helicase DBP4 (DBP4) from Scheffersomyces stipitis (strain ATCC 58785 / CBS 6054 / NBRC 10063 / NRRL Y-11545) (Yeast).